The primary structure comprises 255 residues: Small ribosomal subunit protein uS2 (255 aa).

The interval 226 to 255 (QGVSNEEVAAEQNIDLDEKEKSEETEATEE) is disordered.

It belongs to the universal ribosomal protein uS2 family.

The chain is Small ribosomal subunit protein uS2 from Staphylococcus aureus (strain Mu3 / ATCC 700698).